Here is a 467-residue protein sequence, read N- to C-terminus: 3-isopropylmalate dehydratase large subunit (467 aa).

Residues Cys347, Cys408, and Cys411 each contribute to the [4Fe-4S] cluster site.

Belongs to the aconitase/IPM isomerase family. LeuC type 1 subfamily. Heterodimer of LeuC and LeuD. It depends on [4Fe-4S] cluster as a cofactor.

The enzyme catalyses (2R,3S)-3-isopropylmalate = (2S)-2-isopropylmalate. It participates in amino-acid biosynthesis; L-leucine biosynthesis; L-leucine from 3-methyl-2-oxobutanoate: step 2/4. Functionally, catalyzes the isomerization between 2-isopropylmalate and 3-isopropylmalate, via the formation of 2-isopropylmaleate. This is 3-isopropylmalate dehydratase large subunit from Bordetella bronchiseptica (strain ATCC BAA-588 / NCTC 13252 / RB50) (Alcaligenes bronchisepticus).